The primary structure comprises 181 residues: Oligoribonuclease (181 aa).

One can recognise an Exonuclease domain in the interval Leu-8–Leu-171. The active site involves Tyr-129.

It belongs to the oligoribonuclease family.

Its subcellular location is the cytoplasm. Its function is as follows. 3'-to-5' exoribonuclease specific for small oligoribonucleotides. This is Oligoribonuclease from Shigella flexneri.